Reading from the N-terminus, the 638-residue chain is MPIITLPDGSKKVFEKSVTILEIAQSIGAGLAKATIAGKVNDVLLDATIPINSDSKVVIITSKDKEGIEIIRHSFAHLIGHAVKQIYSDIKMAIGPVIEDGFYYDIFSEYRFTPEDLIKIENRINKLIKTNYDVEILQVSKKEAIKTFKERDETFKLRIIEDIPEEGLINLYKHEEYIDMCRGPHVPNTRHLRHFKLLKLSGSYWRGNSENESLQRIYGTAWAKEKELNDYLKRIEEAEKRDHRKLGKKHSLFHIQEESPGMIFWHPNGWTIYQVLEKYIREILKKNDYLEIKTPQAVDKSLWEKSGHWEKFRDDMFTTASENRTYAIKPMNCPCHIQVFNQGLKSYKDLPIRLAEFGSCHRNEPSGALHGLMRVRNFTQDDAHIFCTEEQIQEEVSTFIDLVFEVYKTFGFDEIIIKLSTRPKKKVGSEEIWDKSEEALTKALDNKNLKWELQPGEGAFYGPKIEFSLKDCLNRVWQCGTIQVDFSMPIRLDATYVDIDNEKRNPVMLHRAILGSFERFIGILIEQYEAKFPIWLAPYQLTLLSITDRNIEKCLKFNELLINNGYRSTVDIRNEKIGYKIREATLERVPLIAVIGDKEEEIDSVSLRALDGRNLGIFNLPNLCKLMDGLIEKRGRTE.

The TGS domain occupies 1 to 61; it reads MPIITLPDGS…NSDSKVVIIT (61 aa). The interval 242 to 533 is catalytic; sequence DHRKLGKKHS…LIEQYEAKFP (292 aa). Residues Cys333, His384, and His510 each contribute to the Zn(2+) site.

Belongs to the class-II aminoacyl-tRNA synthetase family. As to quaternary structure, homodimer. The cofactor is Zn(2+).

Its subcellular location is the cytoplasm. The enzyme catalyses tRNA(Thr) + L-threonine + ATP = L-threonyl-tRNA(Thr) + AMP + diphosphate + H(+). Catalyzes the attachment of threonine to tRNA(Thr) in a two-step reaction: L-threonine is first activated by ATP to form Thr-AMP and then transferred to the acceptor end of tRNA(Thr). Also edits incorrectly charged L-seryl-tRNA(Thr). The protein is Threonine--tRNA ligase of Prochlorococcus marinus (strain MIT 9215).